The following is a 192-amino-acid chain: MKELQDRILKDGQVIGTNILKVNKFINHQVDPVLMEHIGEDFANHFADKGITKVVTIESSGIAPALMAAAKMNVPLVILKKQPSKTLHNDLYQTQVTSFTTEKSYELTLSRDVISEDDNILLIDDFMADGEAATGAIRLLRMAHATVAGIGILIEKSFQPGRRKINEQGYEVYSLARIKYMDEYQIDFIEEN.

Residues leucine 20 and asparagine 27 each coordinate xanthine. Residue 128-132 (ADGEA) participates in 5-phospho-alpha-D-ribose 1-diphosphate binding. Lysine 156 is a xanthine binding site.

This sequence belongs to the purine/pyrimidine phosphoribosyltransferase family. Xpt subfamily. In terms of assembly, homodimer.

It localises to the cytoplasm. It catalyses the reaction XMP + diphosphate = xanthine + 5-phospho-alpha-D-ribose 1-diphosphate. The protein operates within purine metabolism; XMP biosynthesis via salvage pathway; XMP from xanthine: step 1/1. Converts the preformed base xanthine, a product of nucleic acid breakdown, to xanthosine 5'-monophosphate (XMP), so it can be reused for RNA or DNA synthesis. The chain is Xanthine phosphoribosyltransferase from Agathobacter rectalis (strain ATCC 33656 / DSM 3377 / JCM 17463 / KCTC 5835 / VPI 0990) (Eubacterium rectale).